Here is an 85-residue protein sequence, read N- to C-terminus: MDTPSSGSDSFDFEAALKELEGLVERMERGELSLEESLRQFERGVELTRACQKALQEAEQKVETLIGQGADAHEQAFEDPAHRDT.

This sequence belongs to the XseB family. In terms of assembly, heterooligomer composed of large and small subunits.

The protein localises to the cytoplasm. The catalysed reaction is Exonucleolytic cleavage in either 5'- to 3'- or 3'- to 5'-direction to yield nucleoside 5'-phosphates.. In terms of biological role, bidirectionally degrades single-stranded DNA into large acid-insoluble oligonucleotides, which are then degraded further into small acid-soluble oligonucleotides. The polypeptide is Exodeoxyribonuclease 7 small subunit (Alkalilimnicola ehrlichii (strain ATCC BAA-1101 / DSM 17681 / MLHE-1)).